Reading from the N-terminus, the 443-residue chain is Thymidine phosphorylase (443 aa).

The protein belongs to the thymidine/pyrimidine-nucleoside phosphorylase family. As to quaternary structure, homodimer.

The catalysed reaction is thymidine + phosphate = 2-deoxy-alpha-D-ribose 1-phosphate + thymine. It participates in pyrimidine metabolism; dTMP biosynthesis via salvage pathway; dTMP from thymine: step 1/2. In terms of biological role, the enzymes which catalyze the reversible phosphorolysis of pyrimidine nucleosides are involved in the degradation of these compounds and in their utilization as carbon and energy sources, or in the rescue of pyrimidine bases for nucleotide synthesis. The chain is Thymidine phosphorylase from Shewanella pealeana (strain ATCC 700345 / ANG-SQ1).